A 361-amino-acid polypeptide reads, in one-letter code: Mitochondrial import receptor subunit TOM40 homolog (361 aa).

Residues 1–10 are compositionally biased toward low complexity; the sequence is MGNVLAASSP. The segment at 1–71 is disordered; that stretch reads MGNVLAASSP…TASASGAAED (71 aa). The segment covering 11 to 36 has biased composition (pro residues); the sequence is PAGPPPPPAPALVGLPPPPPSPPGFT. 2 stretches are compositionally biased toward low complexity: residues 37–52 and 59–71; these read LPPL…STSR and GAAT…AAED.

It belongs to the Tom40 family. As to quaternary structure, forms part of the preprotein translocase complex of the outer mitochondrial membrane (TOM complex) which consists of at least 7 different proteins (TOMM5, TOMM6, TOMM7, TOMM20, TOMM22, TOMM40 and TOMM70). Interacts with mitochondrial targeting sequences. Interacts with TIMM29; linking the TIM22 complex to the TOM complex. Forms a complex with BCAP31 (via C-terminus) which mediates the translocation of components of the mitochondrial membrane respiratory chain NADH dehydrogenase (Complex I) from the cytosol to the mitochondria. Interacts (via N-terminus) with CYP1A1 (via mitochondrial targeting signal); this interaction is required for CYP1A1 translocation across the mitochondrial outer membrane.

Its subcellular location is the mitochondrion outer membrane. Functionally, channel-forming protein essential for import of protein precursors into mitochondria. Plays a role in the assembly of the mitochondrial membrane respiratory chain NADH dehydrogenase (Complex I) by forming a complex with BCAP31 and mediating the translocation of Complex I components from the cytosol to the mitochondria. This is Mitochondrial import receptor subunit TOM40 homolog (TOMM40) from Homo sapiens (Human).